Reading from the N-terminus, the 475-residue chain is Glutamyl-tRNA(Gln) amidotransferase subunit A (475 aa).

Residues lysine 69 and serine 144 each act as charge relay system in the active site. Serine 168 functions as the Acyl-ester intermediate in the catalytic mechanism.

Belongs to the amidase family. GatA subfamily. As to quaternary structure, heterotrimer of A, B and C subunits.

It catalyses the reaction L-glutamyl-tRNA(Gln) + L-glutamine + ATP + H2O = L-glutaminyl-tRNA(Gln) + L-glutamate + ADP + phosphate + H(+). Allows the formation of correctly charged Gln-tRNA(Gln) through the transamidation of misacylated Glu-tRNA(Gln) in organisms which lack glutaminyl-tRNA synthetase. The reaction takes place in the presence of glutamine and ATP through an activated gamma-phospho-Glu-tRNA(Gln). The chain is Glutamyl-tRNA(Gln) amidotransferase subunit A from Methanococcoides burtonii (strain DSM 6242 / NBRC 107633 / OCM 468 / ACE-M).